Here is a 465-residue protein sequence, read N- to C-terminus: Ribulose bisphosphate carboxylase large chain (465 aa).

Position 4 is an N6,N6,N6-trimethyllysine (K4). 2 residues coordinate substrate: N113 and T163. K165 serves as the catalytic Proton acceptor. K167 serves as a coordination point for substrate. Mg(2+)-binding residues include K191, D193, and E194. K191 is subject to N6-carboxylysine. Residue H284 is the Proton acceptor of the active site. Positions 285, 317, and 369 each coordinate substrate.

This sequence belongs to the RuBisCO large chain family. Type I subfamily. In terms of assembly, heterohexadecamer of 8 large chains and 8 small chains; disulfide-linked. The disulfide link is formed within the large subunit homodimers. It depends on Mg(2+) as a cofactor. In terms of processing, the disulfide bond which can form in the large chain dimeric partners within the hexadecamer appears to be associated with oxidative stress and protein turnover.

The protein resides in the plastid. The protein localises to the chloroplast. The catalysed reaction is 2 (2R)-3-phosphoglycerate + 2 H(+) = D-ribulose 1,5-bisphosphate + CO2 + H2O. It carries out the reaction D-ribulose 1,5-bisphosphate + O2 = 2-phosphoglycolate + (2R)-3-phosphoglycerate + 2 H(+). In terms of biological role, ruBisCO catalyzes two reactions: the carboxylation of D-ribulose 1,5-bisphosphate, the primary event in carbon dioxide fixation, as well as the oxidative fragmentation of the pentose substrate in the photorespiration process. Both reactions occur simultaneously and in competition at the same active site. In Cornus canadensis (Bunchberry dogwood), this protein is Ribulose bisphosphate carboxylase large chain.